The sequence spans 78 residues: Small ribosomal subunit protein bS20 (78 aa).

It belongs to the bacterial ribosomal protein bS20 family.

In terms of biological role, binds directly to 16S ribosomal RNA. This Streptococcus thermophilus (strain ATCC BAA-491 / LMD-9) protein is Small ribosomal subunit protein bS20.